A 255-amino-acid chain; its full sequence is EEF1A lysine methyltransferase 4 (255 aa).

S-adenosyl-L-methionine is bound by residues Trp-26 and Tyr-30. At Tyr-39 the chain carries Phosphotyrosine. S-adenosyl-L-methionine contacts are provided by residues Trp-41, Gly-66, 88–89 (DY), 113–114 (DV), and Lys-130. A Required for methyltransferase activity motif is present at residues 129 to 134 (EKGTLD).

This sequence belongs to the methyltransferase superfamily.

It carries out the reaction L-lysyl-[protein] + S-adenosyl-L-methionine = N(6)-methyl-L-lysyl-[protein] + S-adenosyl-L-homocysteine + H(+). The enzyme catalyses N(6)-methyl-L-lysyl-[protein] + S-adenosyl-L-methionine = N(6),N(6)-dimethyl-L-lysyl-[protein] + S-adenosyl-L-homocysteine + H(+). It catalyses the reaction N(6),N(6)-dimethyl-L-lysyl-[protein] + S-adenosyl-L-methionine = N(6),N(6),N(6)-trimethyl-L-lysyl-[protein] + S-adenosyl-L-homocysteine + H(+). In terms of biological role, protein-lysine methyltransferase that efficiently catalyzes three successive methylations on 'Lys-36' in eukaryotic translation elongation factor 1 alpha (EEF1A1 or EEF1A2). This Homo sapiens (Human) protein is EEF1A lysine methyltransferase 4.